A 1343-amino-acid chain; its full sequence is DNA-directed RNA polymerase subunit beta (1343 aa).

It belongs to the RNA polymerase beta chain family. The RNAP catalytic core consists of 2 alpha, 1 beta, 1 beta' and 1 omega subunit. When a sigma factor is associated with the core the holoenzyme is formed, which can initiate transcription.

It carries out the reaction RNA(n) + a ribonucleoside 5'-triphosphate = RNA(n+1) + diphosphate. Functionally, DNA-dependent RNA polymerase catalyzes the transcription of DNA into RNA using the four ribonucleoside triphosphates as substrates. This Shewanella pealeana (strain ATCC 700345 / ANG-SQ1) protein is DNA-directed RNA polymerase subunit beta.